A 467-amino-acid polypeptide reads, in one-letter code: Iroquois-class homeodomain protein irx-1 (467 aa).

The segment at residues 126–188 (DPGRPKNATR…NARRRLKKEN (63 aa)) is a DNA-binding region (homeobox; TALE-type). Disordered stretches follow at residues 198–307 (EDDN…PHNK), 319–342 (SPDGALKSSPPPSQANHTSPPIQH), and 410–467 (SLSS…LPSA). Composition is skewed to acidic residues over residues 215–225 (EDDEEIDLESI) and 233–244 (NDGEQSNEEEDE). Basic and acidic residues predominate over residues 245–262 (KLEHLRQGEKESFKKESE). A compositionally biased stretch (basic and acidic residues) spans 415–431 (KTPERTSPKHSDRENLP). The span at 447-460 (RENTLSQQEGTSRI) shows a compositional bias: polar residues.

This sequence belongs to the TALE/IRO homeobox family. As to expression, expressed in the neural plate in overlapping patterns with other irx members, which all share an anterior border of expression. Also expressed in the mesoderm, placodes and notochord. Broadly expressed in the tailbud rhombencephalon (hindbrain). Outside the nervous system and at tailbud stages, expressed in the developing otic vesicle, branchial arches, prospective heart region and pronephros.

The protein localises to the nucleus. In terms of biological role, acts partially redundantly with other irx members in neural patterning. Required for formation of the posterior forebrain, midbrain, hindbrain, and to a lesser extent, spinal cord. Acts early in neural plate development to induce expression of some but not all proneural genes, and specify a neural precursor state. Also up-regulates repressors that prevent neuronal differentiation. Patterns the neuroectoderm in both the anterior/posterior and dorsal/ventral axes. Acts primarily as a transcriptional repressor during neural development, and binds to the bmp4 promoter to repress gene expression and thus mediate down-regulation of bmp4 by wnt signaling. Controls multiple processes through bmp4-repression including neural plate development, neural crest specification and Spemann organizer development. Involved in the specification of the preplacodal field at the anterior border of the neural plate. Regulates the genetic cascade of interactions that are necessary for positioning the isthmus organizer and the formation of the midbrain-hindbrain boundary. Required during at least two stages of pronephros kidney development; during neurula stages, maintains transcription of key renal genes to define the size and identity of the pronephric anlage, probably in part through regulation of bmp-signaling. Subsequently required for proper formation of the intermediate tubule segment of the pronephros. Acts principally as a transcriptional activator during pronephros development. The polypeptide is Iroquois-class homeodomain protein irx-1 (Xenopus tropicalis (Western clawed frog)).